Consider the following 146-residue polypeptide: 2S sulfur-rich seed storage protein 1 (146 aa).

Positions 1–22 (MAKISVAAAALLVLMALGHATA) are cleaved as a signal peptide. A propeptide spanning residues 23-36 (FRATVTTTVVEEEN) is cleaved from the precursor. Pyrrolidone carboxylic acid is present on glutamine 37. 4 disulfides stabilise this stretch: cysteine 40-cysteine 92, cysteine 53-cysteine 81, cysteine 82-cysteine 130, and cysteine 94-cysteine 137. Residues 65–69 (PYQTM) constitute a propeptide that is removed on maturation. The propeptide occupies 143-146 (IAGF).

This sequence belongs to the 2S seed storage albumins family. The mature protein consists of a small and a large chain linked by disulfide bonds.

Its function is as follows. This is a 2S seed storage protein. The polypeptide is 2S sulfur-rich seed storage protein 1 (BE2S1) (Bertholletia excelsa (Brazil nut)).